We begin with the raw amino-acid sequence, 211 residues long: Uracil phosphoribosyltransferase (211 aa).

5-phospho-alpha-D-ribose 1-diphosphate is bound by residues R78, R103, and 130 to 138 (DPMLATGSS). Residues I193 and 198–200 (GDA) contribute to the uracil site. Position 199 (D199) interacts with 5-phospho-alpha-D-ribose 1-diphosphate.

This sequence belongs to the UPRTase family. It depends on Mg(2+) as a cofactor.

The catalysed reaction is UMP + diphosphate = 5-phospho-alpha-D-ribose 1-diphosphate + uracil. The protein operates within pyrimidine metabolism; UMP biosynthesis via salvage pathway; UMP from uracil: step 1/1. With respect to regulation, allosterically activated by GTP. Its function is as follows. Catalyzes the conversion of uracil and 5-phospho-alpha-D-ribose 1-diphosphate (PRPP) to UMP and diphosphate. This Acinetobacter baylyi (strain ATCC 33305 / BD413 / ADP1) protein is Uracil phosphoribosyltransferase.